Reading from the N-terminus, the 88-residue chain is Small ribosomal subunit protein bS20 (88 aa).

It belongs to the bacterial ribosomal protein bS20 family.

Its function is as follows. Binds directly to 16S ribosomal RNA. The sequence is that of Small ribosomal subunit protein bS20 from Methylocella silvestris (strain DSM 15510 / CIP 108128 / LMG 27833 / NCIMB 13906 / BL2).